We begin with the raw amino-acid sequence, 899 residues long: MSVQYDAFSVEQTCADLETDMYNGLSSLQEITRRNKVHGDNDLKVEDEENMVVQFLKQFVKDPLILLLFASSAISVTLGNIDDAISIALAIVIVVTVGFVQEYRSEQSLKALNNLVPHYCNVIRSGKTEHIVASKLVPGDLVILQIGDRVPADLRIVEATELEIDESNLTGENSPRKKSSEAISSNISLTERNNIAFMGTLVRHGHGRGIVVATGSDTEFGRVFLTMQQTEKPKTPLQNSMDDLGKQLSLISLIGIAVIVLVGFFQGKNWLEMLTIGVSLAVAAIPEGLPIIVTVTLALGVLRMSKKRAIIRRLPSVETLGSVNVICSDKTGTLTMNHMTVTKIYTCGMLAAFSLPESEHIELSVRRTVGIEKALLAAALCNNSKVHNKADSILDTTCPWAGFPVDVALIECSERFGLKDPRETYSRISEVSFSSERKYMSVAVQYNSSKMNFMKGATEQVLSSCAYFSDQDGVQHELTAEMKENIQRNEFEMAASGLRIIAVASGINTNKLVFHGLFGINDPPRPQVRESVQYLMTGGVRVIMITGDSVVTAISIARSLGMAIPSNDEEAIRNYALTGAQLDDLDSSSLRDAVSRVVVFARTTPQHKMKIVEALQSLGDVVAMTGDGVNDAPALKLADIGIAMGRQGTDVAKEAADMILTDDSFATILSAVEEGKGIFNNIKNFITFQLSTSVAALSLIAISSVFGFQNPLNAMQILWINILMDGPPAQSLGVESVDEDVMMKPPRPRNAPIISVQLLQRVLLSAFIIVTVTIVVFRVQMQDGNVTARDTTMTFTCFVFFDMFNALACRSETKSVFKLGIFSNRMFNIAVGGSLIGQALVVYASPFQRIFQTEAIGLKDVLILLACTSSVLWVDEIRKWYRRRKGLVRTKSNYLLRNV.

The next 4 membrane-spanning stretches (helical) occupy residues 59–79 (FVKD…VTLG), 80–100 (NIDD…VGFV), 247–267 (QLSL…FFQG), and 282–302 (VAAI…LGVL). The active-site 4-aspartylphosphate intermediate is the Asp-329. The next 4 membrane-spanning stretches (helical) occupy residues 688–708 (FQLS…VFGF), 757–777 (QLLQ…IVVF), 827–847 (FNIA…ASPF), and 854–874 (EAIG…VLWV). Position 892 is a phosphoserine (Ser-892).

This sequence belongs to the cation transport ATPase (P-type) (TC 3.A.3) family.

Its subcellular location is the endoplasmic reticulum membrane. The enzyme catalyses Ca(2+)(in) + ATP + H2O = Ca(2+)(out) + ADP + phosphate + H(+). Transports calcium and manganese ions into the cell. Regulates cell morphogenesis through control of manganese and calcium homeostasis. This is Calcium-transporting ATPase 1 (pmr1) from Schizosaccharomyces pombe (strain 972 / ATCC 24843) (Fission yeast).